The following is a 427-amino-acid chain: 3-phosphoshikimate 1-carboxyvinyltransferase (427 aa).

The 3-phosphoshikimate site is built by lysine 22, serine 23, and arginine 27. Lysine 22 contacts phosphoenolpyruvate. Residues glycine 96 and arginine 124 each contribute to the phosphoenolpyruvate site. The 3-phosphoshikimate site is built by serine 170, serine 171, glutamine 172, serine 198, aspartate 313, asparagine 336, and lysine 340. Residue glutamine 172 coordinates phosphoenolpyruvate. The active-site Proton acceptor is aspartate 313. Arginine 344, arginine 386, and lysine 411 together coordinate phosphoenolpyruvate.

The protein belongs to the EPSP synthase family. As to quaternary structure, monomer.

Its subcellular location is the cytoplasm. The enzyme catalyses 3-phosphoshikimate + phosphoenolpyruvate = 5-O-(1-carboxyvinyl)-3-phosphoshikimate + phosphate. It participates in metabolic intermediate biosynthesis; chorismate biosynthesis; chorismate from D-erythrose 4-phosphate and phosphoenolpyruvate: step 6/7. In terms of biological role, catalyzes the transfer of the enolpyruvyl moiety of phosphoenolpyruvate (PEP) to the 5-hydroxyl of shikimate-3-phosphate (S3P) to produce enolpyruvyl shikimate-3-phosphate and inorganic phosphate. The chain is 3-phosphoshikimate 1-carboxyvinyltransferase from Aeromonas salmonicida (strain A449).